Consider the following 138-residue polypeptide: MRVTQGTFCYLPDLTDEQIRKQIQYAINQGWAVSVEYTDDPHPRNSYWEMWGLPLFDVKDPATIMFEVQECRKQFPNHYIKVLAFNSTKGIESTALSFIVNRPANEPGFVLRRIESNDRVQRYQIHSYATEKPEGSRY.

This sequence belongs to the RuBisCO small chain family. In terms of assembly, heterohexadecamer of 8 large and 8 small subunits.

The protein localises to the plastid. The protein resides in the chloroplast. RuBisCO catalyzes two reactions: the carboxylation of D-ribulose 1,5-bisphosphate, the primary event in carbon dioxide fixation, as well as the oxidative fragmentation of the pentose substrate in the photorespiration process. Both reactions occur simultaneously and in competition at the same active site. Although the small subunit is not catalytic it is essential for maximal activity. The sequence is that of Ribulose bisphosphate carboxylase small subunit from Cyanidioschyzon merolae (strain NIES-3377 / 10D) (Unicellular red alga).